Consider the following 414-residue polypeptide: MTQANLSETLFKPRFKHTETSTLVRRFNRGSQPPMQSALDGKNVPHWYRMINRLMWIWRGVDPREILDVQARIVMSDAERTDDDLYDTVIGYRGGNWIYEWAKQAMDWQQKACQEQDAMRSGRYWLHASTLYNIAAYPHLKGDELAEQAQALANRAYEEAAQRLPGSLREMEFAVPGGSPVTAFLHMPKGDGPFPTVLMCGGLDAMQTDYYTLYERYFAPRGIAMLTLDMPSVGFSSKWKLTQDSSLLHQHVLKALPNVPWVDHTRVAAFGFRFGANVAVRLAYLEAPRLKAVACLGPVVHALLSDPQRQSTVPEMYLDVLASRLGMHDASDEALRVELNRYSLKVQGLLGRRCPTPMLSGFWKNDPFSPEEESRLITTSSSDGKLIEIPFNPVYRNFDRALQEITDWINHRLC.

It belongs to the FrsA family.

The catalysed reaction is a carboxylic ester + H2O = an alcohol + a carboxylate + H(+). Its function is as follows. Catalyzes the hydrolysis of esters. The protein is Esterase FrsA of Salmonella choleraesuis (strain SC-B67).